We begin with the raw amino-acid sequence, 320 residues long: tRNA dimethylallyltransferase (320 aa).

Residue 5–12 (GPTAVGKS) coordinates ATP. Residue 7–12 (TAVGKS) coordinates substrate. Residues 30-33 (DSMQ) are interaction with substrate tRNA.

It belongs to the IPP transferase family. In terms of assembly, monomer. It depends on Mg(2+) as a cofactor.

It catalyses the reaction adenosine(37) in tRNA + dimethylallyl diphosphate = N(6)-dimethylallyladenosine(37) in tRNA + diphosphate. Its function is as follows. Catalyzes the transfer of a dimethylallyl group onto the adenine at position 37 in tRNAs that read codons beginning with uridine, leading to the formation of N6-(dimethylallyl)adenosine (i(6)A). This is tRNA dimethylallyltransferase from Heliobacterium modesticaldum (strain ATCC 51547 / Ice1).